The chain runs to 676 residues: Pescadillo homolog (676 aa).

The interval 277–296 (TIEGSNKQSNNSSNQEVSRD) is disordered. Residues 281–291 (SNKQSNNSSNQ) show a composition bias toward low complexity. The BRCT domain occupies 351-467 (EAGALFAPFT…KLLRPDLYAP (117 aa)). The interval 471-676 (LPPHLSPWVK…RRKLEKTGEK (206 aa)) is disordered. A compositionally biased stretch (acidic residues) spans 494 to 519 (EQEEEGEAEMAGEEEEEESDEEMEEA). Over residues 520–531 (PETKKADAKADE) the composition is skewed to basic and acidic residues. Composition is skewed to acidic residues over residues 532–541 (SESEDEDESV) and 548–581 (ADSD…DEEE). The stretch at 571 to 676 (EAASESEDEE…RRKLEKTGEK (106 aa)) forms a coiled coil. Residues 582 to 592 (AARTQHQKELE) show a composition bias toward basic and acidic residues. Over residues 611–624 (KKKSSQAKKIAAKK) the composition is skewed to basic residues. Basic and acidic residues predominate over residues 625–635 (RKEEEELERQK).

It belongs to the pescadillo family. Component of the NOP7 complex, composed of erb1, nop7 and ytm1. The complex is held together by erb1, which interacts with nop7 via its N-terminal domain and with ytm1 via a high-affinity interaction between the seven-bladed beta-propeller domains of the 2 proteins. The NOP7 complex associates with the 66S pre-ribosome.

Its subcellular location is the nucleus. The protein localises to the nucleolus. It is found in the nucleoplasm. Component of the NOP7 complex, which is required for maturation of the 25S and 5.8S ribosomal RNAs and formation of the 60S ribosome. The protein is Pescadillo homolog (nop7) of Aspergillus terreus (strain NIH 2624 / FGSC A1156).